A 256-amino-acid chain; its full sequence is Alcohol dehydrogenase (256 aa).

12-35 serves as a coordination point for NAD(+); the sequence is FVAGLGGIGLDTSKELVKRDLKNL. Residue serine 140 coordinates substrate. The active-site Proton acceptor is tyrosine 153.

The protein belongs to the short-chain dehydrogenases/reductases (SDR) family. Homodimer.

The enzyme catalyses a primary alcohol + NAD(+) = an aldehyde + NADH + H(+). It carries out the reaction a secondary alcohol + NAD(+) = a ketone + NADH + H(+). The chain is Alcohol dehydrogenase (Adh) from Drosophila yakuba (Fruit fly).